Reading from the N-terminus, the 122-residue chain is Small ribosomal subunit protein uS13 (122 aa).

A disordered region spans residues 95 to 122 (GLPVRGQRTHTNARTRKGPAKSIAGKKK).

It belongs to the universal ribosomal protein uS13 family. As to quaternary structure, part of the 30S ribosomal subunit. Forms a loose heterodimer with protein S19. Forms two bridges to the 50S subunit in the 70S ribosome.

Its function is as follows. Located at the top of the head of the 30S subunit, it contacts several helices of the 16S rRNA. In the 70S ribosome it contacts the 23S rRNA (bridge B1a) and protein L5 of the 50S subunit (bridge B1b), connecting the 2 subunits; these bridges are implicated in subunit movement. Contacts the tRNAs in the A and P-sites. This is Small ribosomal subunit protein uS13 from Nitrobacter hamburgensis (strain DSM 10229 / NCIMB 13809 / X14).